A 302-amino-acid polypeptide reads, in one-letter code: Aspartate carbamoyltransferase catalytic subunit (302 aa).

Residues arginine 51 and threonine 52 each contribute to the carbamoyl phosphate site. Lysine 80 serves as a coordination point for L-aspartate. Carbamoyl phosphate-binding residues include arginine 101, histidine 129, and glutamine 132. Residues arginine 162 and arginine 224 each coordinate L-aspartate. Carbamoyl phosphate contacts are provided by leucine 263 and proline 264.

This sequence belongs to the aspartate/ornithine carbamoyltransferase superfamily. ATCase family. As to quaternary structure, heterododecamer (2C3:3R2) of six catalytic PyrB chains organized as two trimers (C3), and six regulatory PyrI chains organized as three dimers (R2).

The enzyme catalyses carbamoyl phosphate + L-aspartate = N-carbamoyl-L-aspartate + phosphate + H(+). It participates in pyrimidine metabolism; UMP biosynthesis via de novo pathway; (S)-dihydroorotate from bicarbonate: step 2/3. In terms of biological role, catalyzes the condensation of carbamoyl phosphate and aspartate to form carbamoyl aspartate and inorganic phosphate, the committed step in the de novo pyrimidine nucleotide biosynthesis pathway. The protein is Aspartate carbamoyltransferase catalytic subunit of Azobacteroides pseudotrichonymphae genomovar. CFP2.